The sequence spans 524 residues: Metalloendopeptidase OMA1, mitochondrial (524 aa).

Residues 1-13 (MSFICGLQSAARN) constitute a mitochondrion transit peptide. Residues 14 to 143 (HVFFRFNSLS…RNFHTSPRFQ (130 aa)) constitute a propeptide that is removed on maturation. Topologically, residues 144–195 (AAPVPLLLMILKPVQKLFAIIVGRGIRKWWQALPPNKKEVVKENIRKNKWKL) are mitochondrial matrix. The interval 148–167 (PLLLMILKPVQKLFAIIVGR) is cardiolipin-binding. A stress-sensor region region spans residues 165–195 (VGRGIRKWWQALPPNKKEVVKENIRKNKWKL). The helical transmembrane segment at 196–216 (FLGLSSFGLLFVVFYFTHLEV) threads the bilayer. H327 lines the Zn(2+) pocket. The active site involves E328. H331 and E392 together coordinate Zn(2+). C407 and C465 are disulfide-bonded.

This sequence belongs to the peptidase M48 family. As to quaternary structure, homooligomer. It depends on Zn(2+) as a cofactor. May form a redox-dependent disulfide bond. Exists in a semi-oxidized state and is activated by prolonged hypoxia. In terms of processing, autocatalytically cleaved in response to mitochondrial depolarization both at the N-terminus and C-terminus to generate the short active form (S-OMA1). Autocatalytic processing at the C-terminus takes place at residues 447-456. The S-OMA1 form is unstable. OMA1 pre-processing by AFG3L2 may participate in maturation before OMA1 autocatalytic cleavage. Degraded by YMEL1 in response to membrane depolarization. Protein turnover is regulated by prohibitin (PHB and PHB2), which promotes degradation of OMA1 in a cardiolipin-binding manner. In terms of tissue distribution, widely expressed, with strong expression in the heart, skeletal muscle, kidney and liver.

The protein resides in the mitochondrion inner membrane. With respect to regulation, protease activity is activated upon autocatalytic cleavage in response to mitochondrial depolarization. Functionally, metalloprotease that is part of the quality control system in the inner membrane of mitochondria. Activated in response to various mitochondrial stress, leading to the proteolytic cleavage of target proteins, such as OPA1, UQCC3 and DELE1. Involved in the fusion of the mitochondrial inner membranes by mediating cleavage of OPA1 at S1 position, generating the soluble OPA1 (S-OPA1), which cooperates with the membrane form (L-OPA1) to coordinate the fusion of mitochondrial inner membranes. Following stress conditions that induce loss of mitochondrial membrane potential, mediates cleavage of OPA1, leading to excess production of soluble OPA1 (S-OPA1) and negative regulation of mitochondrial fusion. Involved in mitochondrial safeguard in response to transient mitochondrial membrane depolarization (flickering) by catalyzing cleavage of OPA1, leading to excess production of S-OPA1, preventing mitochondrial hyperfusion. Also acts as a regulator of apoptosis: upon BAK and BAX aggregation, mediates cleavage of OPA1, leading to the remodeling of mitochondrial cristae and allowing the release of cytochrome c from mitochondrial cristae. In depolarized mitochondria, may also act as a backup protease for PINK1 by mediating PINK1 cleavage and promoting its subsequent degradation by the proteasome. May also cleave UQCC3 in response to mitochondrial depolarization. Also acts as an activator of the integrated stress response (ISR): in response to mitochondrial stress, mediates cleavage of DELE1 to generate the processed form of DELE1 (S-DELE1), which translocates to the cytosol and activates EIF2AK1/HRI to trigger the ISR. Its role in mitochondrial quality control is essential for regulating lipid metabolism as well as to maintain body temperature and energy expenditure under cold-stress conditions. Binds cardiolipin, possibly regulating its protein turnover. Required for the stability of the respiratory supercomplexes. In Homo sapiens (Human), this protein is Metalloendopeptidase OMA1, mitochondrial.